The following is a 121-amino-acid chain: Large ribosomal subunit protein uL18 (121 aa).

Belongs to the universal ribosomal protein uL18 family. In terms of assembly, part of the 50S ribosomal subunit; part of the 5S rRNA/L5/L18/L25 subcomplex. Contacts the 5S and 23S rRNAs.

In terms of biological role, this is one of the proteins that bind and probably mediate the attachment of the 5S RNA into the large ribosomal subunit, where it forms part of the central protuberance. The chain is Large ribosomal subunit protein uL18 from Verminephrobacter eiseniae (strain EF01-2).